Consider the following 155-residue polypeptide: SsrA-binding protein (155 aa).

The protein belongs to the SmpB family.

The protein resides in the cytoplasm. Required for rescue of stalled ribosomes mediated by trans-translation. Binds to transfer-messenger RNA (tmRNA), required for stable association of tmRNA with ribosomes. tmRNA and SmpB together mimic tRNA shape, replacing the anticodon stem-loop with SmpB. tmRNA is encoded by the ssrA gene; the 2 termini fold to resemble tRNA(Ala) and it encodes a 'tag peptide', a short internal open reading frame. During trans-translation Ala-aminoacylated tmRNA acts like a tRNA, entering the A-site of stalled ribosomes, displacing the stalled mRNA. The ribosome then switches to translate the ORF on the tmRNA; the nascent peptide is terminated with the 'tag peptide' encoded by the tmRNA and targeted for degradation. The ribosome is freed to recommence translation, which seems to be the essential function of trans-translation. The chain is SsrA-binding protein from Halothermothrix orenii (strain H 168 / OCM 544 / DSM 9562).